The sequence spans 164 residues: UPF0303 protein RHE_CH02903 (164 aa).

This sequence belongs to the UPF0303 family.

The protein is UPF0303 protein RHE_CH02903 of Rhizobium etli (strain ATCC 51251 / DSM 11541 / JCM 21823 / NBRC 15573 / CFN 42).